The following is a 718-amino-acid chain: Polyribonucleotide nucleotidyltransferase (718 aa).

Mg(2+) is bound by residues aspartate 506 and aspartate 512. A KH domain is found at 572–632 (PKLELFSVDP…EQIKAAKDYI (61 aa)). Residues 657–718 (GQEFQGIVKK…NGKISVDLCE (62 aa)) enclose the S1 motif domain.

The protein belongs to the polyribonucleotide nucleotidyltransferase family. Mg(2+) serves as cofactor.

It is found in the cytoplasm. It carries out the reaction RNA(n+1) + phosphate = RNA(n) + a ribonucleoside 5'-diphosphate. Functionally, involved in mRNA degradation. Catalyzes the phosphorolysis of single-stranded polyribonucleotides processively in the 3'- to 5'-direction. The chain is Polyribonucleotide nucleotidyltransferase from Campylobacter jejuni subsp. doylei (strain ATCC BAA-1458 / RM4099 / 269.97).